The following is a 159-amino-acid chain: Phosphopantetheine adenylyltransferase (159 aa).

Thr-10 lines the substrate pocket. Residues 10-11 (TF) and His-18 contribute to the ATP site. Residues Lys-42, Met-74, and Arg-88 each coordinate substrate. Residues 89 to 91 (GLR), Glu-99, and 124 to 130 (WSFISSS) each bind ATP.

This sequence belongs to the bacterial CoaD family. As to quaternary structure, homohexamer. Mg(2+) is required as a cofactor.

It localises to the cytoplasm. It catalyses the reaction (R)-4'-phosphopantetheine + ATP + H(+) = 3'-dephospho-CoA + diphosphate. It participates in cofactor biosynthesis; coenzyme A biosynthesis; CoA from (R)-pantothenate: step 4/5. Functionally, reversibly transfers an adenylyl group from ATP to 4'-phosphopantetheine, yielding dephospho-CoA (dPCoA) and pyrophosphate. The chain is Phosphopantetheine adenylyltransferase from Klebsiella pneumoniae subsp. pneumoniae (strain ATCC 700721 / MGH 78578).